The chain runs to 262 residues: Phosphonates import ATP-binding protein PhnC (262 aa).

One can recognise an ABC transporter domain in the interval 5–253 (IRVEKLAKTF…RFDHLYRSIN (249 aa)). 37-44 (GPSGSGKS) lines the ATP pocket.

The protein belongs to the ABC transporter superfamily. Phosphonates importer (TC 3.A.1.9.1) family. As to quaternary structure, the complex is composed of two ATP-binding proteins (PhnC), two transmembrane proteins (PhnE) and a solute-binding protein (PhnD).

The protein resides in the cell inner membrane. The enzyme catalyses phosphonate(out) + ATP + H2O = phosphonate(in) + ADP + phosphate + H(+). Functionally, part of the ABC transporter complex PhnCDE involved in phosphonates import. Responsible for energy coupling to the transport system. This Shigella sonnei (strain Ss046) protein is Phosphonates import ATP-binding protein PhnC.